A 113-amino-acid chain; its full sequence is Large ribosomal subunit protein uL22 (113 aa).

This sequence belongs to the universal ribosomal protein uL22 family. In terms of assembly, part of the 50S ribosomal subunit.

In terms of biological role, this protein binds specifically to 23S rRNA; its binding is stimulated by other ribosomal proteins, e.g. L4, L17, and L20. It is important during the early stages of 50S assembly. It makes multiple contacts with different domains of the 23S rRNA in the assembled 50S subunit and ribosome. The globular domain of the protein is located near the polypeptide exit tunnel on the outside of the subunit, while an extended beta-hairpin is found that lines the wall of the exit tunnel in the center of the 70S ribosome. The sequence is that of Large ribosomal subunit protein uL22 from Bacillus pumilus (strain SAFR-032).